Reading from the N-terminus, the 225-residue chain is Protein GrpE (225 aa).

A compositionally biased stretch (polar residues) spans methionine 1–valine 15. 2 disordered regions span residues methionine 1 to glutamine 48 and valine 198 to alanine 225. Low complexity predominate over residues glycine 201 to alanine 225.

The protein belongs to the GrpE family. As to quaternary structure, homodimer.

The protein localises to the cytoplasm. Its function is as follows. Participates actively in the response to hyperosmotic and heat shock by preventing the aggregation of stress-denatured proteins, in association with DnaK and GrpE. It is the nucleotide exchange factor for DnaK and may function as a thermosensor. Unfolded proteins bind initially to DnaJ; upon interaction with the DnaJ-bound protein, DnaK hydrolyzes its bound ATP, resulting in the formation of a stable complex. GrpE releases ADP from DnaK; ATP binding to DnaK triggers the release of the substrate protein, thus completing the reaction cycle. Several rounds of ATP-dependent interactions between DnaJ, DnaK and GrpE are required for fully efficient folding. The polypeptide is Protein GrpE (Synechococcus sp. (strain CC9605)).